A 79-amino-acid chain; its full sequence is Probable Fe(2+)-trafficking protein (79 aa).

It belongs to the Fe(2+)-trafficking protein family. As to quaternary structure, monomer.

Could be a mediator in iron transactions between iron acquisition and iron-requiring processes, such as synthesis and/or repair of Fe-S clusters in biosynthetic enzymes. The protein is Probable Fe(2+)-trafficking protein of Blochmanniella floridana.